A 738-amino-acid polypeptide reads, in one-letter code: Dipeptidyl peptidase 3 (738 aa).

Position 2 is an N-acetylalanine (Ala-2). Zn(2+) is bound at residue His-450. Residue Glu-451 is part of the active site. 2 residues coordinate Zn(2+): His-455 and Glu-508.

The protein belongs to the peptidase M49 family. It depends on Zn(2+) as a cofactor.

The protein resides in the cytoplasm. The enzyme catalyses Release of an N-terminal dipeptide from a peptide comprising four or more residues, with broad specificity. Also acts on dipeptidyl 2-naphthylamides.. Inhibited by spinorphin, an opioid peptide derived from hemoglobin. In terms of biological role, cleaves and degrades bioactive peptides, including angiotensin, Leu-enkephalin and Met-enkephalin. Also cleaves Arg-Arg-beta-naphthylamide. The polypeptide is Dipeptidyl peptidase 3 (Dpp3) (Rattus norvegicus (Rat)).